A 617-amino-acid polypeptide reads, in one-letter code: MAGAPGPEIREKFQAALALSRVELHKNPEKEPYKSKYGARALLEEVRALLGPAPEDDDERAADDGPVDQALGAGEPRDAEGPGAQRALRLAVVEFHLGVNHIDTEELSAGEEHLVRCLSLLRPYRLSLGCVSLFIQAQNNLGILWSEREEIETARTYLESSEALYNQYMKEIGSPPLDPTEHFLPEEEKLTEQERSKRFEKVYTHNLYYLAQVYQHMEMFEKAAHYCHSTLKRQLEHNAYHPMEWAINAATLSQFYINKLCFMEARHCLSAANVIFGQTGKITATEDTPEVEGDMPELYHQRKGEIARCWIKYCLTLMQNAQLSMQDNIGELDLDKQSELRALRRKELDEEESVRKRAVQFGTGELRDAISAVEEKVRYLRPLDFEEARELFLLGQHYVYEAKEFFQIDGYVTDHIEVVQDHSALFKVLAFFEADMERRCKMHKRRIAMLEPLIVDLNPQYYQLVNRQIQFEIAHAYYDMMDLKVAIADKLREPDSHTVKKINSLNQSALKYYQLFLDSLRDPNKVFPEHIGEDVLRPAMLAKFRVARLYGKIITADPKKELENLATSLEHYKFIVDYCETHPEAAQEIEVELELSKEMVSLLPTKMERFRAKMALT.

Residues 48–83 (ALLGPAPEDDDERAADDGPVDQALGAGEPRDAEGPG) are disordered. Position 174 is a phosphoserine (S174).

It belongs to the KIF-binding protein family. As to quaternary structure, interacts with KIF1B; positively regulates KIF1B microtubule motor activity. Interacts with STMN2.

It localises to the cytoplasm. The protein localises to the cytoskeleton. In terms of biological role, activator of KIF1B plus-end-directed microtubule motor activity. Required for organization of axonal microtubules, and axonal outgrowth and maintenance during peripheral and central nervous system development. This is KIF-binding protein (Kifbp) from Rattus norvegicus (Rat).